The chain runs to 240 residues: ATP-dependent Clp protease proteolytic subunit 2 (240 aa).

Ser-132 functions as the Nucleophile in the catalytic mechanism. His-157 is a catalytic residue.

It belongs to the peptidase S14 family. As to quaternary structure, fourteen ClpP subunits assemble into 2 heptameric rings which stack back to back to give a disk-like structure with a central cavity, resembling the structure of eukaryotic proteasomes.

It is found in the cytoplasm. The enzyme catalyses Hydrolysis of proteins to small peptides in the presence of ATP and magnesium. alpha-casein is the usual test substrate. In the absence of ATP, only oligopeptides shorter than five residues are hydrolyzed (such as succinyl-Leu-Tyr-|-NHMec, and Leu-Tyr-Leu-|-Tyr-Trp, in which cleavage of the -Tyr-|-Leu- and -Tyr-|-Trp bonds also occurs).. Functionally, cleaves peptides in various proteins in a process that requires ATP hydrolysis. Has a chymotrypsin-like activity. Plays a major role in the degradation of misfolded proteins. The polypeptide is ATP-dependent Clp protease proteolytic subunit 2 (Synechococcus elongatus (strain ATCC 33912 / PCC 7942 / FACHB-805) (Anacystis nidulans R2)).